The following is a 208-amino-acid chain: Protein-L-isoaspartate O-methyltransferase (208 aa).

Ser59 is a catalytic residue.

The protein belongs to the methyltransferase superfamily. L-isoaspartyl/D-aspartyl protein methyltransferase family.

Its subcellular location is the cytoplasm. It carries out the reaction [protein]-L-isoaspartate + S-adenosyl-L-methionine = [protein]-L-isoaspartate alpha-methyl ester + S-adenosyl-L-homocysteine. Its function is as follows. Catalyzes the methyl esterification of L-isoaspartyl residues in peptides and proteins that result from spontaneous decomposition of normal L-aspartyl and L-asparaginyl residues. It plays a role in the repair and/or degradation of damaged proteins. This is Protein-L-isoaspartate O-methyltransferase from Aliivibrio fischeri (strain ATCC 700601 / ES114) (Vibrio fischeri).